The primary structure comprises 40 residues: Allophycocyanin alpha-B chain (40 aa).

This sequence belongs to the phycobiliprotein family. In terms of assembly, heterodimer of an alpha and a beta chain. In terms of processing, contains one covalently linked bilin chromophore.

It is found in the cellular thylakoid membrane. Its function is as follows. Light-harvesting photosynthetic bile pigment-protein from the phycobiliprotein complex. Allophycocyanin has a maximum absorption at approximately 650 nanometers. The chain is Allophycocyanin alpha-B chain from Mastigocladus laminosus (Fischerella sp.).